The chain runs to 476 residues: Inactive glucose-1-phosphate adenylyltransferase small subunit 2, chloroplastic (476 aa).

The N-terminal 55 residues, 1-55 (MQISSSSFITKFTNLHMVRSTSDHHQWRHNYNLKQLFIPNLSVSNSQHLPLNQSV), are a transit peptide targeting the chloroplast.

Belongs to the bacterial/plant glucose-1-phosphate adenylyltransferase family. As to quaternary structure, heterotetramer. In terms of tissue distribution, expressed at very low levels in leaves, inflorescences, fruits, and roots.

The protein resides in the plastid. Its subcellular location is the chloroplast. The chain is Inactive glucose-1-phosphate adenylyltransferase small subunit 2, chloroplastic from Arabidopsis thaliana (Mouse-ear cress).